A 509-amino-acid chain; its full sequence is Src substrate cortactin (509 aa).

A disordered region spans residues 1-28 (MWKASAGHAVSITQDDGGADDWETDPDF). The segment covering 17–28 (GGADDWETDPDF) has biased composition (acidic residues). Cortactin repeat units lie at residues 80–116 (ASHG…SQVD), 117–153 (SVRG…SQKD), 154–190 (YSSG…SQKD), 191–227 (YSKG…SQKD), and 228–264 (YVKG…SQKD). N6-acetyllysine is present on residues K87 and K107. S113 bears the Phosphoserine mark. The residue at position 119 (R119) is an Omega-N-methylarginine. K124 carries the post-translational modification N6-acetyllysine. The residue at position 144 (K144) is an N6-acetyllysine; alternate. K144 participates in a covalent cross-link: Glycyl lysine isopeptide (Lys-Gly) (interchain with G-Cter in SUMO1); alternate. A Glycyl lysine isopeptide (Lys-Gly) (interchain with G-Cter in SUMO2); alternate cross-link involves residue K144. S150 bears the Phosphoserine mark. 3 positions are modified to N6-acetyllysine: K152, K161, and K171. Position 181 is an N6-acetyllysine; alternate (K181). Residue K181 forms a Glycyl lysine isopeptide (Lys-Gly) (interchain with G-Cter in SUMO1); alternate linkage. K181 participates in a covalent cross-link: Glycyl lysine isopeptide (Lys-Gly) (interchain with G-Cter in SUMO2); alternate. 2 positions are modified to N6-acetyllysine: K193 and K198. K218 participates in a covalent cross-link: Glycyl lysine isopeptide (Lys-Gly) (interchain with G-Cter in SUMO1). At K235 the chain carries N6-acetyllysine. S261 bears the Phosphoserine mark. The stretch at 265–287 (YAKGFGGKYGVQKDRMDKNASTF) is one Cortactin 6; truncated repeat. N6-acetyllysine occurs at positions 267, 272, 277, and 309. The stretch at 311 to 364 (SNIRANFENLAKEREQEDRRKAEAERAQRMAQERQEQEEARRKLEEQARAKKQT) forms a coiled coil. The tract at residues 318–409 (ENLAKEREQE…EPEPEYSTEA (92 aa)) is disordered. Residues 320 to 359 (LAKEREQEDRRKAEAERAQRMAQERQEQEEARRKLEEQAR) are compositionally biased toward basic and acidic residues. T364 is subject to Phosphothreonine. A phosphoserine mark is found at S368, S370, S380, and S381. At Y384 the chain carries Phosphotyrosine; by FAK1. Residues 393–406 (EPSYGSSEPEPEYS) show a composition bias toward low complexity. The residue at position 405 (Y405) is a Phosphotyrosine. Residue S406 is modified to Phosphoserine. Phosphotyrosine; by FAK1 occurs at positions 429 and 445. Phosphotyrosine; by SRC occurs at positions 445 and 448. In terms of domain architecture, SH3 spans 451–509 (DLGITAIALYDYQAAGDDEISFDPDDVITNIEMIDDGWWRGVCKGRYGLFPANYVELRQ).

As to quaternary structure, part of a complex composed of NEDD9, AURKA and CTTN; within the complex NEDD9 acts as a scaffold protein and is required for complex formation. Interacts (via N-terminus) with NEDD9. Identified in a complex containing FGFR4, NCAM1, CDH2, PLCG1, FRS2, SRC, SHC1, GAP43 and CTTN. Forms a complex with ABL1 and MYLK. Interacts with SHANK2 and SHANK3 (via its SH3 domain). Interacts with PLXDC2 and SRCIN1. Interacts with SAMSN1 (via SH3 domain). Interacts (via SH3 domain) with ASAP1 (via Pro-rich region). Interacts with FER. Interacts with FGD1. Interacts with ABL2. Interacts with CTTNBP2NL; this interaction may target CTTN to stress fibers. Interacts with CTTNBP2; this interaction may target CTTN at the cell cortex or dendritic spines. Interacts (via SH3 domain) with DNM2. Interacts with ACTN1. Interacts with KCNA2 (via non-phosphorylated C-terminus). Interacts with PTK2/FAK1. Interacts with KCNH1. Interacts (via SH3 domain) with DIP2A (via N-terminus); the interaction enhances CTTN acetylation and is required for proper synaptic transmission. Interacts with XIRP1 (via N-terminus); the interaction promotes CTTN localization to intercalated disks in cardiomyocytes. Post-translationally, acetylated. In terms of processing, phosphorylated by FER. Phosphorylated in response to FGR activation. Phosphorylation by SRC promotes MYLK binding. Tyrosine phosphorylation in transformed cells may contribute to cellular growth regulation and transformation. Phosphorylated by PKN2 at both serine and threonine residues in a GTP-bound Rac1-dependent manner in hyaluronan-induced astrocytes and hence down-regulated CTTN ability to associate with filamentous actin. Phosphorylated on tyrosine residues in response to CHRM1 activation. Phosphorylated by PTK2/FAK1 in response to cell adhesion. In terms of tissue distribution, detected in liver (at protein level).

It localises to the cytoplasm. The protein localises to the cytoskeleton. Its subcellular location is the cell projection. The protein resides in the lamellipodium. It is found in the ruffle. It localises to the dendrite. The protein localises to the cell membrane. Its subcellular location is the podosome. The protein resides in the cell junction. It is found in the focal adhesion. It localises to the membrane. The protein localises to the clathrin-coated pit. Its subcellular location is the dendritic spine. The protein resides in the cell cortex. It is found in the endoplasmic reticulum. Functionally, contributes to the organization of the actin cytoskeleton and cell shape. Plays a role in the formation of lamellipodia and in cell migration. Plays a role in the regulation of neuron morphology, axon growth and formation of neuronal growth cones. Through its interaction with CTTNBP2, involved in the regulation of neuronal spine density. Plays a role in focal adhesion assembly and turnover. In complex with ABL1 and MYLK regulates cortical actin-based cytoskeletal rearrangement critical to sphingosine 1-phosphate (S1P)-mediated endothelial cell (EC) barrier enhancement. Plays a role in intracellular protein transport and endocytosis, and in modulating the levels of potassium channels present at the cell membrane. Plays a role in receptor-mediated endocytosis via clathrin-coated pits. Required for stabilization of KCNH1 channels at the cell membrane. The sequence is that of Src substrate cortactin from Rattus norvegicus (Rat).